Reading from the N-terminus, the 342-residue chain is HTH-type transcriptional regulator GbpR (342 aa).

Positions Leu-16–Asn-73 constitute an HTH lysR-type domain. Residues Leu-33–Gly-52 constitute a DNA-binding region (H-T-H motif).

It belongs to the LysR transcriptional regulatory family.

Functionally, does not seem to be required for sbpA expression. This chain is HTH-type transcriptional regulator GbpR (gbpR), found in Azospirillum brasilense.